The primary structure comprises 80 residues: uncharacterized protein (80 aa).

Residues 1-15 form the signal peptide; sequence MEVIVVIVVIVVVIA. Positions 23–44 are enriched in low complexity; the sequence is NSNSNSNNSSDSSNESNNSDSS. The interval 23-52 is disordered; it reads NSNSNSNNSSDSSNESNNSDSSKNGGSDIY. N-linked (GlcNAc...) asparagine glycosylation is found at asparagine 29, asparagine 30, asparagine 36, asparagine 39, and asparagine 64.

Its subcellular location is the secreted. This is an uncharacterized protein from Dictyostelium discoideum (Social amoeba).